We begin with the raw amino-acid sequence, 322 residues long: RNA-binding motif protein, X-linked 2 (322 aa).

Lysine 8 is covalently cross-linked (Glycyl lysine isopeptide (Lys-Gly) (interchain with G-Cter in SUMO2)). One can recognise an RRM domain in the interval 36-114; that stretch reads AWIFLGGLPY…RTIRVDHVSN (79 aa). Residues 134 to 322 are disordered; the sequence is KGCGARTPSP…SSNPSDRWRH (189 aa). At threonine 140 the chain carries Phosphothreonine. Phosphoserine is present on serine 149. Positions 155 to 171 are enriched in basic residues; that stretch reads TKKHKKDKKEKKKKKKE. A phosphoserine mark is found at serine 186 and serine 188. The span at 195–223 shows a compositional bias: basic and acidic residues; the sequence is KEKDDTGPKKHSSKNSERAQKSEPREGQK. Serine 232 carries the phosphoserine modification. Basic and acidic residues predominate over residues 240–274; the sequence is RELKKEKPKHEHKSSSRREAREEKTRIRDRGRSSD. Residue lysine 243 forms a Glycyl lysine isopeptide (Lys-Gly) (interchain with G-Cter in SUMO2) linkage. Serine 272 bears the Phosphoserine mark. A compositionally biased stretch (basic residues) spans 289–308; the sequence is YRSRSRSRDKSHRHKRARRS. A Phosphoserine modification is found at serine 314.

It belongs to the IST3 family. As to quaternary structure, part of the activated spliceosome B/catalytic step 1 spliceosome, one of the forms of the spliceosome which has a well-formed active site but still cannot catalyze the branching reaction and is composed of at least 52 proteins, the U2, U5 and U6 snRNAs and the pre-mRNA. Component of the minor spliceosome, which splices U12-type introns.

It localises to the nucleus. In terms of biological role, involved in pre-mRNA splicing as component of the activated spliceosome. As a component of the minor spliceosome, involved in the splicing of U12-type introns in pre-mRNAs. The polypeptide is RNA-binding motif protein, X-linked 2 (RBMX2) (Homo sapiens (Human)).